The following is a 279-amino-acid chain: Undecaprenyl-diphosphatase (279 aa).

Helical transmembrane passes span 10–30 (FICF…FLPI), 48–68 (LGVS…IYYF), 96–116 (LFIY…LIKL), 128–148 (GLFS…LSEI), 203–223 (SFLV…FSLF), 229–249 (IDII…IFAI), and 259–279 (NNTL…LTTL).

The protein belongs to the UppP family.

It localises to the cell inner membrane. It catalyses the reaction di-trans,octa-cis-undecaprenyl diphosphate + H2O = di-trans,octa-cis-undecaprenyl phosphate + phosphate + H(+). In terms of biological role, catalyzes the dephosphorylation of undecaprenyl diphosphate (UPP). Confers resistance to bacitracin. The polypeptide is Undecaprenyl-diphosphatase (Prochlorococcus marinus (strain NATL1A)).